Here is a 56-residue protein sequence, read N- to C-terminus: MAVQQNKKSRSRRDMRRSHDALTTAAISVDKASGEKHLRHHVTADGYYRGRKVINK.

Residues 1–37 form a disordered region; sequence MAVQQNKKSRSRRDMRRSHDALTTAAISVDKASGEKH. Residues 7 to 16 show a composition bias toward basic residues; sequence KKSRSRRDMR.

The protein belongs to the bacterial ribosomal protein bL32 family.

This chain is Large ribosomal subunit protein bL32 (rpmF), found in Pasteurella multocida (strain Pm70).